Here is a 558-residue protein sequence, read N- to C-terminus: Oxygen-dependent choline dehydrogenase (558 aa).

FAD is bound at residue 4 to 33; sequence DYIIIGAGSAGNVLATRLTEDSDTTVLLLE. His473 acts as the Proton acceptor in catalysis.

It belongs to the GMC oxidoreductase family. The cofactor is FAD.

It carries out the reaction choline + A = betaine aldehyde + AH2. The catalysed reaction is betaine aldehyde + NAD(+) + H2O = glycine betaine + NADH + 2 H(+). The protein operates within amine and polyamine biosynthesis; betaine biosynthesis via choline pathway; betaine aldehyde from choline (cytochrome c reductase route): step 1/1. Functionally, involved in the biosynthesis of the osmoprotectant glycine betaine. Catalyzes the oxidation of choline to betaine aldehyde and betaine aldehyde to glycine betaine at the same rate. The polypeptide is Oxygen-dependent choline dehydrogenase (Citrobacter koseri (strain ATCC BAA-895 / CDC 4225-83 / SGSC4696)).